Here is an 81-residue protein sequence, read N- to C-terminus: RNA-binding protein KhpA (81 aa).

Positions 34–81 (KIALRLSVHKSDTGKVIGKQGRTAKAIRTAVFAAGVQSSKKVQFEIFD) constitute a KH domain.

This sequence belongs to the KhpA RNA-binding protein family. Forms a complex with KhpB.

Its subcellular location is the cytoplasm. A probable RNA chaperone. Forms a complex with KhpB which binds to cellular RNA and controls its expression. Plays a role in peptidoglycan (PG) homeostasis and cell length regulation. The polypeptide is RNA-binding protein KhpA (Bacillus subtilis (strain 168)).